The following is a 474-amino-acid chain: 2-succinylbenzoate--CoA ligase (474 aa).

The protein belongs to the ATP-dependent AMP-binding enzyme family. MenE subfamily.

The catalysed reaction is 2-succinylbenzoate + ATP + CoA = 2-succinylbenzoyl-CoA + AMP + diphosphate. It functions in the pathway quinol/quinone metabolism; 1,4-dihydroxy-2-naphthoate biosynthesis; 1,4-dihydroxy-2-naphthoate from chorismate: step 5/7. The protein operates within quinol/quinone metabolism; menaquinone biosynthesis. Its function is as follows. Converts 2-succinylbenzoate (OSB) to 2-succinylbenzoyl-CoA (OSB-CoA). This is 2-succinylbenzoate--CoA ligase from Staphylococcus epidermidis (strain ATCC 35984 / DSM 28319 / BCRC 17069 / CCUG 31568 / BM 3577 / RP62A).